A 441-amino-acid chain; its full sequence is Maltose-6'-phosphate glucosidase (441 aa).

4 to 70 is an NAD(+) binding site; sequence FSILIAGGGS…PQIKFSYSTN (67 aa). Substrate-binding residues include Arg93 and Asn147. Cys169 is a binding site for Mn(2+). The active-site Proton donor is the Asp170. His200 provides a ligand contact to Mn(2+). Tyr264 serves as the catalytic Proton acceptor. Arg284 contributes to the substrate binding site.

Belongs to the glycosyl hydrolase 4 family. In terms of assembly, homotetramer. Requires NAD(+) as cofactor. Mn(2+) is required as a cofactor. It depends on Fe(2+) as a cofactor. Co(2+) serves as cofactor. The cofactor is Ni(2+).

It carries out the reaction alpha-maltose 6'-phosphate + H2O = D-glucose 6-phosphate + D-glucose. It functions in the pathway glycan degradation; maltose degradation. Its function is as follows. Hydrolyzes a wide variety of 6-phospho-alpha-D-glucosides including maltose-6'P, trehalose-6P and the 6'-phosphorylated derivatives of the five linkage-isomeric alpha-D-glucosyl-D-fructoses: trehalulose-6'P, turanose-6'P, maltulose-6'P, leucrose-6'P, and palatinose-6'P. However, sucrose-6P is not a substrate for MalH, and this enzyme also fails to hydrolyze beta-O-linked phosphorylated disaccharides such as cellobiose-6'P and gentobiose-6'P. The protein is Maltose-6'-phosphate glucosidase (malH) of Fusobacterium mortiferum.